Here is a 433-residue protein sequence, read N- to C-terminus: V-type ATP synthase beta chain (433 aa).

The protein belongs to the ATPase alpha/beta chains family.

Produces ATP from ADP in the presence of a proton gradient across the membrane. The V-type beta chain is a regulatory subunit. The protein is V-type ATP synthase beta chain of Borrelia turicatae (strain 91E135).